Consider the following 315-residue polypeptide: tRNA dimethylallyltransferase (315 aa).

11–18 (GPTASGKS) lines the ATP pocket. Position 13-18 (13-18 (TASGKS)) interacts with substrate. Interaction with substrate tRNA regions lie at residues 36–39 (DSMQ) and 160–164 (QRLIR).

It belongs to the IPP transferase family. In terms of assembly, monomer. Mg(2+) serves as cofactor.

It catalyses the reaction adenosine(37) in tRNA + dimethylallyl diphosphate = N(6)-dimethylallyladenosine(37) in tRNA + diphosphate. Its function is as follows. Catalyzes the transfer of a dimethylallyl group onto the adenine at position 37 in tRNAs that read codons beginning with uridine, leading to the formation of N6-(dimethylallyl)adenosine (i(6)A). This Rickettsia bellii (strain RML369-C) protein is tRNA dimethylallyltransferase.